We begin with the raw amino-acid sequence, 71 residues long: Translational regulator CsrA (71 aa).

Belongs to the CsrA/RsmA family. As to quaternary structure, homodimer; the beta-strands of each monomer intercalate to form a hydrophobic core, while the alpha-helices form wings that extend away from the core.

Its subcellular location is the cytoplasm. In terms of biological role, a key translational regulator that binds mRNA to regulate translation initiation and/or mRNA stability. Mediates global changes in gene expression, shifting from rapid growth to stress survival by linking envelope stress, the stringent response and the catabolite repression systems. Usually binds in the 5'-UTR; binding at or near the Shine-Dalgarno sequence prevents ribosome-binding, repressing translation, binding elsewhere in the 5'-UTR can activate translation and/or stabilize the mRNA. Its function is antagonized by small RNA(s). This is Translational regulator CsrA from Pseudoalteromonas atlantica (strain T6c / ATCC BAA-1087).